The following is a 181-amino-acid chain: Beta-lactoglobulin-2 (181 aa).

The first 18 residues, 1–18 (MKCLLLALGLSLMCGNQA), serve as a signal peptide directing secretion. Cystine bridges form between Cys-84/Cys-179 and Cys-124/Cys-138.

The protein belongs to the calycin superfamily. Lipocalin family. In terms of assembly, monomer.

The protein resides in the secreted. Its function is as follows. Lactoglobulin is the primary component of whey, it binds retinol and is probably involved in the transport of that molecule. This chain is Beta-lactoglobulin-2 (LGB2), found in Equus caballus (Horse).